Here is a 389-residue protein sequence, read N- to C-terminus: Jasmonate O-methyltransferase (389 aa).

An S-adenosyl-L-homocysteine-binding site is contributed by tyrosine 18. Glutamine 25 serves as a coordination point for jasmonate. S-adenosyl-L-homocysteine contacts are provided by cysteine 60, asparagine 65, aspartate 97, leucine 98, serine 142, and phenylalanine 143. Jasmonate contacts are provided by histidine 163 and tryptophan 164. The Mg(2+) site is built by asparagine 186, aspartate 272, phenylalanine 274, and asparagine 275.

It belongs to the methyltransferase superfamily. Type-7 methyltransferase family. The cofactor is Mg(2+). Expressed in rosettes, cauline leaves and developing flowers but not in young seedlings.

The protein resides in the cytoplasm. It is found in the nucleus. The enzyme catalyses jasmonate + S-adenosyl-L-methionine = methyl (-)-jasmonate + S-adenosyl-L-homocysteine. It functions in the pathway lipid metabolism; oxylipin biosynthesis. Functionally, catalyzes the methylation of jasmonate into methyljasmonate, a plant volatile that acts as an important cellular regulator mediating diverse developmental processes and defense responses. This chain is Jasmonate O-methyltransferase, found in Arabidopsis thaliana (Mouse-ear cress).